The chain runs to 158 residues: Transcription elongation factor GreA (158 aa).

Positions 4-75 (EKTYPMTQEG…TQLENMIRNA (72 aa)) form a coiled coil.

This sequence belongs to the GreA/GreB family.

Necessary for efficient RNA polymerase transcription elongation past template-encoded arresting sites. The arresting sites in DNA have the property of trapping a certain fraction of elongating RNA polymerases that pass through, resulting in locked ternary complexes. Cleavage of the nascent transcript by cleavage factors such as GreA or GreB allows the resumption of elongation from the new 3'terminus. GreA releases sequences of 2 to 3 nucleotides. The polypeptide is Transcription elongation factor GreA (Bacillus anthracis (strain A0248)).